We begin with the raw amino-acid sequence, 159 residues long: Phospholipase A2 AP-PLA2-I (159 aa).

A signal peptide spans 1–19 (MNFLVVIVTTVSLAGAASA). The propeptide occupies 20-23 (GEIQ). Disulfide bonds link C51–C159, C53–C69, C68–C139, C75–C132, C85–C125, and C110–C130. Positions 52, 54, and 56 each coordinate Ca(2+). H72 is an active-site residue. Residue D73 participates in Ca(2+) binding. The active site involves D133.

It belongs to the phospholipase A2 family. Group I subfamily. In terms of assembly, homodimer. The cofactor is Ca(2+). In terms of tissue distribution, expressed by the venom gland.

Its subcellular location is the secreted. The enzyme catalyses a 1,2-diacyl-sn-glycero-3-phosphocholine + H2O = a 1-acyl-sn-glycero-3-phosphocholine + a fatty acid + H(+). Functionally, starfish phospholipase A2 (PLA2) that has hemorrhagic and capillary permeability-increasing activities and hence is considered to be deeply involved in the local inflammation. Shows hemolytic activity only in the presence of phosphatidylcholine (PC). PLA2 catalyzes the calcium-dependent hydrolysis of the 2-acyl groups in 3-sn-phosphoglycerides. This chain is Phospholipase A2 AP-PLA2-I, found in Acanthaster planci (Crown-of-thorns starfish).